We begin with the raw amino-acid sequence, 329 residues long: Vitamin B12 import system permease protein BtuC (329 aa).

Helical transmembrane passes span Leu-22–Ala-42, Leu-64–Phe-84, Pro-91–Gly-111, Leu-115–Leu-135, Leu-149–Phe-169, Gly-187–Ile-207, Gly-243–Ile-263, Ala-277–Ala-297, and Glu-305–Leu-325.

Belongs to the binding-protein-dependent transport system permease family. FecCD subfamily. In terms of assembly, the complex is composed of two ATP-binding proteins (BtuD), two transmembrane proteins (BtuC) and a solute-binding protein (BtuF).

Its subcellular location is the cell inner membrane. Part of the ABC transporter complex BtuCDF involved in vitamin B12 import. Involved in the translocation of the substrate across the membrane. The protein is Vitamin B12 import system permease protein BtuC of Citrobacter koseri (strain ATCC BAA-895 / CDC 4225-83 / SGSC4696).